Here is a 234-residue protein sequence, read N- to C-terminus: Large ribosomal subunit protein uL1 (234 aa).

This sequence belongs to the universal ribosomal protein uL1 family. As to quaternary structure, part of the 50S ribosomal subunit.

Its function is as follows. Binds directly to 23S rRNA. The L1 stalk is quite mobile in the ribosome, and is involved in E site tRNA release. In terms of biological role, protein L1 is also a translational repressor protein, it controls the translation of the L11 operon by binding to its mRNA. This chain is Large ribosomal subunit protein uL1, found in Syntrophobacter fumaroxidans (strain DSM 10017 / MPOB).